Consider the following 133-residue polypeptide: Large ribosomal subunit protein bL17 (133 aa).

The protein belongs to the bacterial ribosomal protein bL17 family. In terms of assembly, part of the 50S ribosomal subunit. Contacts protein L32.

This is Large ribosomal subunit protein bL17 from Thermodesulfovibrio yellowstonii (strain ATCC 51303 / DSM 11347 / YP87).